The sequence spans 280 residues: MAIRKYKPTTSGRRGASVSDFTDITRTKPEKALMRSLHGHGGRNVHGRITTRHKGGGHKRAYRLIDFRRNDTDGVNAKVAHIEYDPNRTANIALLHFLDGKKRYILAPQGLSQGDVVESGANADIKPGNNLPLRNIPAGTLIHAVELRPGGGAKLARSAGSSIQLLGKESSYASLRMPSGEIRRVDVRCRATVGEVGNAEQANINWGKAGRMRWKGKRPSVRGVVMNPVDHPHGGGEGKTSGGRHPVSPWGKPEGRTRKPNKSSNKLIVRRRRTGKKHAR.

Residues 213-280 are disordered; sequence RWKGKRPSVR…RRRTGKKHAR (68 aa). Residues 268 to 280 show a composition bias toward basic residues; the sequence is IVRRRRTGKKHAR.

The protein belongs to the universal ribosomal protein uL2 family. Part of the 50S ribosomal subunit. Forms a bridge to the 30S subunit in the 70S ribosome.

Its function is as follows. One of the primary rRNA binding proteins. Required for association of the 30S and 50S subunits to form the 70S ribosome, for tRNA binding and peptide bond formation. It has been suggested to have peptidyltransferase activity; this is somewhat controversial. Makes several contacts with the 16S rRNA in the 70S ribosome. The chain is Large ribosomal subunit protein uL2 from Mycobacterium leprae (strain Br4923).